A 296-amino-acid chain; its full sequence is Stanniocalcin-2 (296 aa).

The first 24 residues, 1–24 (MCAERLGQFVTLALVFATLDPARG), serve as a signal peptide directing secretion. The segment at 22–44 (ARGTDSTNPPEGPQDRGSQQKGR) is disordered. Asn73 is a glycosylation site (N-linked (GlcNAc...) asparagine). Residues 236 to 296 (RPYHRDTDHH…EQSEYSDIRR (61 aa)) are disordered. Residues 238–258 (YHRDTDHHLTANRGAKGERGS) show a composition bias toward basic and acidic residues.

Belongs to the stanniocalcin family. In terms of assembly, homodimer; disulfide-linked. Expressed in a variety of tissues. Strongly expressed in ovary and to a lesser extent in kidney.

The protein localises to the secreted. In terms of biological role, has an anti-hypocalcemic action on calcium and phosphate homeostasis. This is Stanniocalcin-2 (Stc2) from Rattus norvegicus (Rat).